The sequence spans 367 residues: tRNA/tmRNA (uracil-C(5))-methyltransferase (367 aa).

Glutamine 190, tyrosine 218, asparagine 223, glutamate 239, and aspartate 299 together coordinate S-adenosyl-L-methionine. The active-site Nucleophile is cysteine 324. The active-site Proton acceptor is glutamate 358.

It belongs to the class I-like SAM-binding methyltransferase superfamily. RNA M5U methyltransferase family. TrmA subfamily.

It catalyses the reaction uridine(54) in tRNA + S-adenosyl-L-methionine = 5-methyluridine(54) in tRNA + S-adenosyl-L-homocysteine + H(+). It carries out the reaction uridine(341) in tmRNA + S-adenosyl-L-methionine = 5-methyluridine(341) in tmRNA + S-adenosyl-L-homocysteine + H(+). Its function is as follows. Dual-specificity methyltransferase that catalyzes the formation of 5-methyluridine at position 54 (m5U54) in all tRNAs, and that of position 341 (m5U341) in tmRNA (transfer-mRNA). The sequence is that of tRNA/tmRNA (uracil-C(5))-methyltransferase from Yersinia pestis bv. Antiqua (strain Antiqua).